The following is a 213-amino-acid chain: DELTA-actitoxin-Aas1a (213 aa).

Residues 1–19 form the signal peptide; that stretch reads MSRLIIAFIVVTMVCSAIA. Positions 20 to 34 are excised as a propeptide; it reads LPKKKVEPLEKDEKR. Residues 37-46 form a plays an important role in the hemolytic activity region; it reads AVAGAVIEGG. Residues 45–64 are N-terminal region; sequence GGNLVMSVLDRILEAIGDVN. Residues Ser88, Val121, Ser139, Pro141, Tyr167, Tyr171, and Tyr172 each contribute to the phosphocholine site. Positions 139 to 154 are trp-rich region, which is important for the binding to lipid membrane; that stretch reads SIPYDYNLYSNWWNVK. The Cell attachment site, crucial for protein stability signature appears at 178 to 180; that stretch reads KGD.

The protein belongs to the actinoporin family. Sea anemone subfamily. In terms of assembly, octamer or nonamer in membranes. Monomer in the soluble state.

The protein localises to the secreted. It localises to the nematocyst. The protein resides in the target cell membrane. Pore-forming protein that forms cation-selective hydrophilic pores of around 1 nm and causes cytolysis. Pore formation is a multi-step process that involves specific recognition of membrane sphingomyelin (but neither cholesterol nor phosphatidylcholine) using aromatic rich region and adjacent phosphocholine (POC) binding site, firm binding to the membrane (mainly driven by hydrophobic interactions) accompanied by the transfer of the N-terminal region to the lipid-water interface and finally pore formation after oligomerization of monomers. This protein shows potent hemolytic activity (EC(50)=8.8 ng/ml) that is specifically inhibited by sphingomyelin. Shows no phospholipase A2 activity, nor antimicrobial activity against the four bacteria tested. Is lethal to crayfish. This chain is DELTA-actitoxin-Aas1a, found in Anthopleura asiatica (Sea anemone).